Reading from the N-terminus, the 272-residue chain is Dermonecrotic toxin LvSicTox-alphaIC1biii (272 aa).

His5 is an active-site residue. Glu25 and Asp27 together coordinate Mg(2+). Residue His41 is the Nucleophile of the active site. 2 disulfide bridges follow: Cys45-Cys51 and Cys47-Cys189. Residue Asp84 participates in Mg(2+) binding.

This sequence belongs to the arthropod phospholipase D family. Class II subfamily. Mg(2+) serves as cofactor. As to expression, expressed by the venom gland.

The protein localises to the secreted. The catalysed reaction is an N-(acyl)-sphingosylphosphocholine = an N-(acyl)-sphingosyl-1,3-cyclic phosphate + choline. The enzyme catalyses an N-(acyl)-sphingosylphosphoethanolamine = an N-(acyl)-sphingosyl-1,3-cyclic phosphate + ethanolamine. It catalyses the reaction a 1-acyl-sn-glycero-3-phosphocholine = a 1-acyl-sn-glycero-2,3-cyclic phosphate + choline. It carries out the reaction a 1-acyl-sn-glycero-3-phosphoethanolamine = a 1-acyl-sn-glycero-2,3-cyclic phosphate + ethanolamine. Dermonecrotic toxins cleave the phosphodiester linkage between the phosphate and headgroup of certain phospholipids (sphingolipid and lysolipid substrates), forming an alcohol (often choline) and a cyclic phosphate. This toxin acts on sphingomyelin (SM). It may also act on ceramide phosphoethanolamine (CPE), lysophosphatidylcholine (LPC) and lysophosphatidylethanolamine (LPE), but not on lysophosphatidylserine (LPS), and lysophosphatidylglycerol (LPG). It acts by transphosphatidylation, releasing exclusively cyclic phosphate products as second products. Induces dermonecrosis, hemolysis, increased vascular permeability, edema, inflammatory response, and platelet aggregation. The polypeptide is Dermonecrotic toxin LvSicTox-alphaIC1biii (Loxosceles variegata (Recluse spider)).